The following is a 61-amino-acid chain: Small ribosomal subunit protein uS14 (61 aa).

Cys24, Cys27, Cys40, and Cys43 together coordinate Zn(2+).

This sequence belongs to the universal ribosomal protein uS14 family. Zinc-binding uS14 subfamily. In terms of assembly, part of the 30S ribosomal subunit. Contacts proteins S3 and S10. It depends on Zn(2+) as a cofactor.

Its function is as follows. Binds 16S rRNA, required for the assembly of 30S particles and may also be responsible for determining the conformation of the 16S rRNA at the A site. This is Small ribosomal subunit protein uS14 from Caldanaerobacter subterraneus subsp. tengcongensis (strain DSM 15242 / JCM 11007 / NBRC 100824 / MB4) (Thermoanaerobacter tengcongensis).